The chain runs to 523 residues: Polypyrimidine tract-binding protein 3 (523 aa).

The interval M1–P25 is disordered. RRM domains are found at residues R30–N114, L153–L229, and S329–H403. Residue K36 forms a Glycyl lysine isopeptide (Lys-Gly) (interchain with G-Cter in SUMO2) linkage. The residue at position 98 (Y98) is a Phosphotyrosine. The residue at position 109 (T109) is a Phosphothreonine. A Glycyl lysine isopeptide (Lys-Gly) (interchain with G-Cter in SUMO2) cross-link involves residue K187. K394 carries the N6-acetyllysine modification. The tract at residues V406–P426 is disordered. S425 carries the phosphoserine modification. In terms of domain architecture, RRM 4 spans A446–S521.

In terms of assembly, interacts with THBS4 (via the acidic amphipathic C-terminus).

RNA-binding protein that mediates pre-mRNA alternative splicing regulation. Plays a role in the regulation of cell proliferation, differentiation and migration. Positive regulator of EPO-dependent erythropoiesis. Participates in cell differentiation regulation by repressing tissue-specific exons. Promotes Fas exon 6 skipping. Binds RNA, preferentially to both poly(G) and poly(U). The polypeptide is Polypyrimidine tract-binding protein 3 (Ptbp3) (Mus musculus (Mouse)).